The following is a 480-amino-acid chain: Glycogen synthase (480 aa).

K15 contributes to the ADP-alpha-D-glucose binding site.

The protein belongs to the glycosyltransferase 1 family. Bacterial/plant glycogen synthase subfamily.

The enzyme catalyses [(1-&gt;4)-alpha-D-glucosyl](n) + ADP-alpha-D-glucose = [(1-&gt;4)-alpha-D-glucosyl](n+1) + ADP + H(+). Its pathway is glycan biosynthesis; glycogen biosynthesis. In terms of biological role, synthesizes alpha-1,4-glucan chains using ADP-glucose. The sequence is that of Glycogen synthase from Rhizobium leguminosarum bv. trifolii (strain WSM2304).